A 349-amino-acid chain; its full sequence is Transmembrane protein 255A (349 aa).

The next 4 helical transmembrane spans lie at 30–50 (IYVT…GLAA), 57–77 (VTVG…LGII), 89–109 (LVAS…CAIV), and 226–246 (TILN…LGGF). Residues 303-329 (PSSPPSGLSDEPQSASPSPSYMWSSSA) are disordered. Residues 316–329 (SASPSPSYMWSSSA) are compositionally biased toward low complexity.

The protein belongs to the TMEM255 family.

Its subcellular location is the membrane. In Homo sapiens (Human), this protein is Transmembrane protein 255A (TMEM255A).